The primary structure comprises 254 residues: uncharacterized protein (254 aa).

The protein belongs to the methyltransferase superfamily.

This is an uncharacterized protein from Mycobacterium bovis (strain ATCC BAA-935 / AF2122/97).